The primary structure comprises 345 residues: Tetraacyldisaccharide 4'-kinase (345 aa).

51–58 (HVGGAGKT) contacts ATP.

This sequence belongs to the LpxK family.

The catalysed reaction is a lipid A disaccharide + ATP = a lipid IVA + ADP + H(+). The protein operates within glycolipid biosynthesis; lipid IV(A) biosynthesis; lipid IV(A) from (3R)-3-hydroxytetradecanoyl-[acyl-carrier-protein] and UDP-N-acetyl-alpha-D-glucosamine: step 6/6. In terms of biological role, transfers the gamma-phosphate of ATP to the 4'-position of a tetraacyldisaccharide 1-phosphate intermediate (termed DS-1-P) to form tetraacyldisaccharide 1,4'-bis-phosphate (lipid IVA). The chain is Tetraacyldisaccharide 4'-kinase from Bradyrhizobium sp. (strain BTAi1 / ATCC BAA-1182).